Consider the following 582-residue polypeptide: Fructose-1,6-bisphosphatase class 3 (582 aa).

The protein belongs to the FBPase class 3 family. Mn(2+) serves as cofactor.

The enzyme catalyses beta-D-fructose 1,6-bisphosphate + H2O = beta-D-fructose 6-phosphate + phosphate. It participates in carbohydrate biosynthesis; gluconeogenesis. This chain is Fructose-1,6-bisphosphatase class 3, found in Saccharophagus degradans (strain 2-40 / ATCC 43961 / DSM 17024).